The chain runs to 555 residues: Cytochrome P450 78A11 (555 aa).

Residues 12–32 (VDATWWAYALPALLGADTLCA) form a helical membrane-spanning segment. Cys495 is a heme binding site.

Belongs to the cytochrome P450 family. Heme serves as cofactor. In terms of tissue distribution, expressed in seedlings, shoot apices and young panicles, but not in mature leaves, calli and roots.

It is found in the membrane. Involved in the regular timing (plastochron) of lateral organs formation. May regulate the rate of leaf initiation and the duration of vegetative phase. Seems to be redundant to the function of PLASTOCHRON2, but to act in an independent pathway. This chain is Cytochrome P450 78A11 (CYP78A11), found in Oryza sativa subsp. japonica (Rice).